A 221-amino-acid chain; its full sequence is Telomere repeats-binding bouquet formation protein 2 (221 aa).

This sequence belongs to the TERB2 family. Component of the MAJIN-TERB1-TERB2 complex, composed of MAJIN, TERB1 and TERB2.

Its subcellular location is the chromosome. It is found in the telomere. The protein localises to the nucleus inner membrane. In terms of biological role, meiosis-specific telomere-associated protein involved in meiotic telomere attachment to the nucleus inner membrane, a crucial step for homologous pairing and synapsis. Component of the MAJIN-TERB1-TERB2 complex, which promotes telomere cap exchange by mediating attachment of telomeric DNA to the inner nuclear membrane and replacement of the protective cap of telomeric chromosomes: in early meiosis, the MAJIN-TERB1-TERB2 complex associates with telomeric DNA and the shelterin/telosome complex. During prophase, the complex matures and promotes release of the shelterin/telosome complex from telomeric DNA. The chain is Telomere repeats-binding bouquet formation protein 2 from Bos taurus (Bovine).